Reading from the N-terminus, the 44-residue chain is Cytochrome b559 subunit beta (44 aa).

A helical membrane pass occupies residues 19-35 (WLSIHALAVPTIFFLGS). H23 serves as a coordination point for heme.

This sequence belongs to the PsbE/PsbF family. Heterodimer of an alpha subunit and a beta subunit. PSII is composed of 1 copy each of membrane proteins PsbA, PsbB, PsbC, PsbD, PsbE, PsbF, PsbH, PsbI, PsbJ, PsbK, PsbL, PsbM, PsbT, PsbX, PsbY, PsbZ, Psb30/Ycf12, at least 3 peripheral proteins of the oxygen-evolving complex and a large number of cofactors. It forms dimeric complexes. Heme b serves as cofactor.

It localises to the plastid. The protein resides in the chloroplast thylakoid membrane. Functionally, this b-type cytochrome is tightly associated with the reaction center of photosystem II (PSII). PSII is a light-driven water:plastoquinone oxidoreductase that uses light energy to abstract electrons from H(2)O, generating O(2) and a proton gradient subsequently used for ATP formation. It consists of a core antenna complex that captures photons, and an electron transfer chain that converts photonic excitation into a charge separation. This chain is Cytochrome b559 subunit beta, found in Tetradesmus obliquus (Green alga).